The chain runs to 174 residues: RxLR effector protein 207 (174 aa).

Residues M1–A20 form the signal peptide. Positions R46 to R62 match the RxLR-dEER motif. The interval V82 to T99 is disordered.

It belongs to the RxLR effector family. In terms of assembly, interacts with Nicotiana benthamiana ACD11, BPA1 (binding partner of ACD11), as well as BPA-like proteins BPL1, BPL2, BPL3 and BPL4.

The protein localises to the secreted. Its subcellular location is the host cell membrane. In terms of biological role, secreted effector that activates ROS-mediated cell death in plant host and is essential for virulence. Plays a role in the transition from the biotrophic to necrotrophic stage. Associates with and promotes the degradation of Nicotiana benthamiana BPA1, BPL1, BPL2, and BPL4 to disrupt ACD11 stabilization in a 26S proteasome-dependent manner. This chain is RxLR effector protein 207, found in Phytophthora capsici.